Here is a 633-residue protein sequence, read N- to C-terminus: Chaperone protein HtpG (633 aa).

Residues Met1–Arg345 form an a; substrate-binding region. A b region spans residues Glu346 to Arg562. The segment at Leu563–Gly633 is c.

This sequence belongs to the heat shock protein 90 family. In terms of assembly, homodimer.

Its subcellular location is the cytoplasm. Molecular chaperone. Has ATPase activity. In Halorhodospira halophila (strain DSM 244 / SL1) (Ectothiorhodospira halophila (strain DSM 244 / SL1)), this protein is Chaperone protein HtpG.